Here is a 408-residue protein sequence, read N- to C-terminus: 8-amino-7-oxononanoate synthase (408 aa).

Arginine 20 is a substrate binding site. A pyridoxal 5'-phosphate-binding site is contributed by 119–120 (GY). Position 144 (histidine 144) interacts with substrate. Pyridoxal 5'-phosphate contacts are provided by serine 190, histidine 218, and threonine 246. Lysine 249 is modified (N6-(pyridoxal phosphate)lysine). Threonine 372 lines the substrate pocket.

This sequence belongs to the class-II pyridoxal-phosphate-dependent aminotransferase family. BioF subfamily. Homodimer. Pyridoxal 5'-phosphate serves as cofactor.

It carries out the reaction 6-carboxyhexanoyl-[ACP] + L-alanine + H(+) = (8S)-8-amino-7-oxononanoate + holo-[ACP] + CO2. It functions in the pathway cofactor biosynthesis; biotin biosynthesis. Its function is as follows. Catalyzes the decarboxylative condensation of pimeloyl-[acyl-carrier protein] and L-alanine to produce 8-amino-7-oxononanoate (AON), [acyl-carrier protein], and carbon dioxide. This is 8-amino-7-oxononanoate synthase from Leptothrix cholodnii (strain ATCC 51168 / LMG 8142 / SP-6) (Leptothrix discophora (strain SP-6)).